Here is a 208-residue protein sequence, read N- to C-terminus: Ribosomal RNA small subunit methyltransferase G (208 aa).

S-adenosyl-L-methionine-binding positions include Gly-78, Phe-83, 101–103 (ERS), 129–130 (IE), and Arg-142.

Belongs to the methyltransferase superfamily. RNA methyltransferase RsmG family.

The protein resides in the cytoplasm. Its function is as follows. Specifically methylates the N7 position of a guanine in 16S rRNA. This chain is Ribosomal RNA small subunit methyltransferase G, found in Borreliella burgdorferi (strain ZS7) (Borrelia burgdorferi).